We begin with the raw amino-acid sequence, 360 residues long: Dual-specificity RNA methyltransferase RlmN (360 aa).

The Proton acceptor role is filled by Glu91. The Radical SAM core domain maps to 110-343 (RSEKYTVCIS…CTIRESKGLD (234 aa)). The cysteines at positions 117 and 348 are disulfide-linked. Residues Cys124, Cys128, and Cys131 each coordinate [4Fe-4S] cluster. Residues 174 to 175 (GE), Ser206, 229 to 231 (SLH), and Asn305 contribute to the S-adenosyl-L-methionine site. The active-site S-methylcysteine intermediate is the Cys348.

This sequence belongs to the radical SAM superfamily. RlmN family. Requires [4Fe-4S] cluster as cofactor.

It localises to the cytoplasm. It carries out the reaction adenosine(2503) in 23S rRNA + 2 reduced [2Fe-2S]-[ferredoxin] + 2 S-adenosyl-L-methionine = 2-methyladenosine(2503) in 23S rRNA + 5'-deoxyadenosine + L-methionine + 2 oxidized [2Fe-2S]-[ferredoxin] + S-adenosyl-L-homocysteine. The enzyme catalyses adenosine(37) in tRNA + 2 reduced [2Fe-2S]-[ferredoxin] + 2 S-adenosyl-L-methionine = 2-methyladenosine(37) in tRNA + 5'-deoxyadenosine + L-methionine + 2 oxidized [2Fe-2S]-[ferredoxin] + S-adenosyl-L-homocysteine. Specifically methylates position 2 of adenine 2503 in 23S rRNA and position 2 of adenine 37 in tRNAs. m2A2503 modification seems to play a crucial role in the proofreading step occurring at the peptidyl transferase center and thus would serve to optimize ribosomal fidelity. The protein is Dual-specificity RNA methyltransferase RlmN of Aliarcobacter butzleri (strain RM4018) (Arcobacter butzleri).